The following is a 295-amino-acid chain: Small ribosomal subunit protein uS2 (295 aa).

The tract at residues 260–295 is disordered; that stretch reads KQAKKFSKTKNIDEETNTEFEQALNDADENKNSDNA.

It belongs to the universal ribosomal protein uS2 family.

This is Small ribosomal subunit protein uS2 from Rickettsia felis (strain ATCC VR-1525 / URRWXCal2) (Rickettsia azadi).